We begin with the raw amino-acid sequence, 773 residues long: C-Maf-inducing protein (773 aa).

Residues 1–28 (MDVTSSSGGGDPRQIEETKPLLGSDVSG) form a disordered region. One can recognise a PH domain in the interval 54 to 163 (LLQEGDIQVC…HSLQWKKKIY (110 aa)). A phosphoserine mark is found at Ser-349, Ser-377, Ser-382, and Ser-660. 4 LRR repeats span residues 663–686 (NLEN…IKLP), 687–707 (SLKQ…RLLS), 712–732 (MLQV…LALS), and 736–756 (SLCS…EDLK).

In terms of assembly, interacts with FLNA.

The protein resides in the nucleus. It localises to the cytoplasm. Its function is as follows. Plays a role in T-cell signaling pathway. This is C-Maf-inducing protein (Cmip) from Mus musculus (Mouse).